The chain runs to 540 residues: DEAD-box ATP-dependent RNA helicase 57 (540 aa).

The disordered stretch occupies residues 24-73 (DFARFRQGPPAPDVASAAAPSPEKKRKRQSKAKAKKSKKRRAEGADSASD). Positions 47–64 (KKRKRQSKAKAKKSKKRR) are enriched in basic residues. Positions 101–129 (KSEDSEVVRRRKEVEREIERAAILRKKFD) form a coiled coil. The Q motif signature appears at 146 to 174 (ELVSRYGCDSYLVGNLSKLGFQEPTPIQR). The 171-residue stretch at 177–347 (IPILLSGREC…RTIMHDAVRV (171 aa)) folds into the Helicase ATP-binding domain. Position 190 to 197 (190 to 197 (APTGSGKT)) interacts with ATP. Positions 294–297 (DESD) match the DEAD box motif. The region spanning 375–519 (ALRQSFAESL…EVPSWIKALP (145 aa)) is the Helicase C-terminal domain.

This sequence belongs to the DEAD box helicase family. DDX52/ROK1 subfamily.

The enzyme catalyses ATP + H2O = ADP + phosphate + H(+). This Oryza sativa subsp. japonica (Rice) protein is DEAD-box ATP-dependent RNA helicase 57.